A 181-amino-acid polypeptide reads, in one-letter code: Oligoribonuclease (181 aa).

The Exonuclease domain maps to 8 to 171; the sequence is LIWIDLEMTG…DDIRESVAEL (164 aa). The active site involves Y129.

It belongs to the oligoribonuclease family.

Its subcellular location is the cytoplasm. In terms of biological role, 3'-to-5' exoribonuclease specific for small oligoribonucleotides. This chain is Oligoribonuclease, found in Salmonella choleraesuis (strain SC-B67).